The sequence spans 108 residues: ATP-dependent Clp protease adapter protein ClpS (108 aa).

It belongs to the ClpS family. In terms of assembly, binds to the N-terminal domain of the chaperone ClpA.

Its function is as follows. Involved in the modulation of the specificity of the ClpAP-mediated ATP-dependent protein degradation. This chain is ATP-dependent Clp protease adapter protein ClpS, found in Cupriavidus necator (strain ATCC 17699 / DSM 428 / KCTC 22496 / NCIMB 10442 / H16 / Stanier 337) (Ralstonia eutropha).